We begin with the raw amino-acid sequence, 300 residues long: METQDHTLYVLLGPTGVGKTDLSLDIAERLGSPIISADSRQIFRELPIGTAAPTPEQRAKVPHLFVGTHSVRDYYSAGMYEVEVLEALKELFRKYRGVLLTGGSMMYIDAVCRGIDDIPDPFPEVREELYARYAAEGLDGILAQLRLLDPDYYAKVDRRNYKRVIHGLEICLSTGRPFSSFHRHEAKERPFRIVKIGLYREREELCKRIDARVLEMMEQGLEEEARAVYPLRHLNALNTVGYKEMFEYFDGSIDRAEAVRRIQRNSRVYARKQMTWFRRDSTIRWFHPEADKGTVLTLVT.

An ATP-binding site is contributed by 13–20 (GPTGVGKT). 15 to 20 (TGVGKT) provides a ligand contact to substrate. Residues 38–41 (DSRQ) are interaction with substrate tRNA.

Belongs to the IPP transferase family. As to quaternary structure, monomer. The cofactor is Mg(2+).

The enzyme catalyses adenosine(37) in tRNA + dimethylallyl diphosphate = N(6)-dimethylallyladenosine(37) in tRNA + diphosphate. In terms of biological role, catalyzes the transfer of a dimethylallyl group onto the adenine at position 37 in tRNAs that read codons beginning with uridine, leading to the formation of N6-(dimethylallyl)adenosine (i(6)A). This chain is tRNA dimethylallyltransferase 1, found in Porphyromonas gingivalis (strain ATCC BAA-308 / W83).